The sequence spans 445 residues: Exodeoxyribonuclease 7 large subunit (445 aa).

This sequence belongs to the XseA family. Heterooligomer composed of large and small subunits.

The protein localises to the cytoplasm. The catalysed reaction is Exonucleolytic cleavage in either 5'- to 3'- or 3'- to 5'-direction to yield nucleoside 5'-phosphates.. Bidirectionally degrades single-stranded DNA into large acid-insoluble oligonucleotides, which are then degraded further into small acid-soluble oligonucleotides. The chain is Exodeoxyribonuclease 7 large subunit from Xanthomonas oryzae pv. oryzae (strain PXO99A).